The primary structure comprises 932 residues: Protocadherin gamma-A2 (932 aa).

A signal peptide spans 1 to 28 (MAALQKLPHCRKLFLLCFLLATLWEARA). Cadherin domains lie at 29 to 133 (GQIR…APRF), 134 to 242 (GVEE…APVF), 243 to 347 (TQPE…APEF), 348 to 452 (YMTS…APAF), 453 to 562 (SRTS…PPEI), and 570 to 682 (DGST…EPSA). Over 29 to 692 (GQIRYSVREE…KPNDSDLTLY (664 aa)) the chain is Extracellular. N-linked (GlcNAc...) asparagine glycans are attached at residues Asn419 and Asn545. The N-linked (GlcNAc...) asparagine glycan is linked to Asn685. Residues 693–713 (LVVAVAAVSCVFLAFVIVLLA) form a helical membrane-spanning segment. Residues 714–932 (HRLRRWHKSR…KKKSGKKEKK (219 aa)) are Cytoplasmic-facing. Disordered regions lie at residues 798 to 841 (LEEE…WPNN) and 902 to 932 (ATLTNAAGKRDGKAPAGGNGNKKKSGKKEKK). Positions 806–841 (FSQQAPPNTDWRFSQAQRPGTSGSQNGDDTGTWPNN) are enriched in polar residues. The span at 922-932 (NKKKSGKKEKK) shows a compositional bias: basic residues.

It localises to the cell membrane. In terms of biological role, potential calcium-dependent cell-adhesion protein. May be involved in the establishment and maintenance of specific neuronal connections in the brain. This is Protocadherin gamma-A2 (PCDHGA2) from Pan troglodytes (Chimpanzee).